A 257-amino-acid polypeptide reads, in one-letter code: Thiazole synthase (257 aa).

The active-site Schiff-base intermediate with DXP is lysine 96. 1-deoxy-D-xylulose 5-phosphate is bound by residues glycine 157, 184-185 (AG), and 206-207 (NT).

It belongs to the ThiG family. In terms of assembly, homotetramer. Forms heterodimers with either ThiH or ThiS.

Its subcellular location is the cytoplasm. It catalyses the reaction [ThiS sulfur-carrier protein]-C-terminal-Gly-aminoethanethioate + 2-iminoacetate + 1-deoxy-D-xylulose 5-phosphate = [ThiS sulfur-carrier protein]-C-terminal Gly-Gly + 2-[(2R,5Z)-2-carboxy-4-methylthiazol-5(2H)-ylidene]ethyl phosphate + 2 H2O + H(+). It functions in the pathway cofactor biosynthesis; thiamine diphosphate biosynthesis. In terms of biological role, catalyzes the rearrangement of 1-deoxy-D-xylulose 5-phosphate (DXP) to produce the thiazole phosphate moiety of thiamine. Sulfur is provided by the thiocarboxylate moiety of the carrier protein ThiS. In vitro, sulfur can be provided by H(2)S. This chain is Thiazole synthase, found in Allorhizobium ampelinum (strain ATCC BAA-846 / DSM 112012 / S4) (Agrobacterium vitis (strain S4)).